The sequence spans 424 residues: Histidine--tRNA ligase (424 aa).

The protein belongs to the class-II aminoacyl-tRNA synthetase family. In terms of assembly, homodimer.

Its subcellular location is the cytoplasm. The catalysed reaction is tRNA(His) + L-histidine + ATP = L-histidyl-tRNA(His) + AMP + diphosphate + H(+). The chain is Histidine--tRNA ligase from Salmonella heidelberg (strain SL476).